The primary structure comprises 294 residues: Nucleoside-specific channel-forming protein Tsx (294 aa).

The N-terminal stretch at 1-22 (MKKTLLAAGAVVALSTTFAAGA) is a signal peptide.

It belongs to the nucleoside-specific channel-forming outer membrane porin (Tsx) (TC 1.B.10) family.

It is found in the cell outer membrane. Its function is as follows. Functions as a substrate-specific channel for nucleosides and deoxynucleosides. Also functions in albicidin uptake and as receptor for colicin K. Also is a receptor for several Tsx-specific bacteriophages. This is Nucleoside-specific channel-forming protein Tsx from Klebsiella pneumoniae.